The chain runs to 266 residues: MEMSLLSIVLLGIVEGVTEFLPVSSTGHLILAGEVMKVPQGTETFDIVIQLGAILAVVVLYRERFAAVLAGLGRRDPAAIRFTRNVLVGFLPSAVIGAVAYGAIKAMLNTPIIVAVALILGGIAILVIERLVRSPTCDSVEGMSLRTSFGVGLVQCLSMIPGVSRSGATIMGALTLGVERRTAAEYSFFLAIPTMLGATTLALWKARHELGDAQATAIAIGFVVSFIVAMLVIRWFLGVVTRHGFAPFAWYRIIAGTAALIWLLAR.

Helical transmembrane passes span 3 to 23 (MSLL…FLPV), 41 to 61 (GTET…VVLY), 86 to 106 (VLVG…AIKA), 108 to 128 (LNTP…ILVI), 149 to 171 (FGVG…ATIM), 184 to 204 (AEYS…LALW), 220 to 240 (IGFV…LGVV), and 245 to 265 (FAPF…WLLA).

The protein belongs to the UppP family.

It localises to the cell inner membrane. The enzyme catalyses di-trans,octa-cis-undecaprenyl diphosphate + H2O = di-trans,octa-cis-undecaprenyl phosphate + phosphate + H(+). In terms of biological role, catalyzes the dephosphorylation of undecaprenyl diphosphate (UPP). Confers resistance to bacitracin. The chain is Undecaprenyl-diphosphatase from Rhizorhabdus wittichii (strain DSM 6014 / CCUG 31198 / JCM 15750 / NBRC 105917 / EY 4224 / RW1) (Sphingomonas wittichii).